We begin with the raw amino-acid sequence, 674 residues long: F420-dependent formate dehydrogenase 1 subunit alpha (674 aa).

Residues 3–59 (LDFIHTICPYCGTGCGVDLVVKDGTLVGTNPFKRHPVNEGKTCIKGSYCHEFVHRDD) enclose the 4Fe-4S Mo/W bis-MGD-type domain. [4Fe-4S] cluster contacts are provided by C10, C13, C17, and C45. A non-standard amino acid (selenocysteine) is located at residue U132.

Belongs to the prokaryotic molybdopterin-containing oxidoreductase family. In terms of assembly, dimer of an alpha (FdhA1) and a beta (FdhB1) subunit. Requires [4Fe-4S] cluster as cofactor. Mo-bis(molybdopterin guanine dinucleotide) is required as a cofactor. Zn(2+) serves as cofactor.

The catalysed reaction is oxidized coenzyme F420-(gamma-L-Glu)(n) + formate + 2 H(+) = reduced coenzyme F420-(gamma-L-Glu)(n) + CO2. Functionally, catalyzes the oxidation of formate to carbon dioxide, with coenzyme F420 as the electron acceptor. In vitro can also use methyl viologen as electron acceptor. This chain is F420-dependent formate dehydrogenase 1 subunit alpha, found in Methanococcus maripaludis (strain DSM 14266 / JCM 13030 / NBRC 101832 / S2 / LL).